The following is a 415-amino-acid chain: UDP-N-acetylglucosamine 1-carboxyvinyltransferase (415 aa).

Lysine 22–asparagine 23 lines the phosphoenolpyruvate pocket. UDP-N-acetyl-alpha-D-glucosamine is bound at residue arginine 92. Cysteine 116 serves as the catalytic Proton donor. 2-(S-cysteinyl)pyruvic acid O-phosphothioketal is present on cysteine 116. UDP-N-acetyl-alpha-D-glucosamine is bound by residues arginine 121 to leucine 125, aspartate 304, and valine 326.

It belongs to the EPSP synthase family. MurA subfamily.

The protein resides in the cytoplasm. It catalyses the reaction phosphoenolpyruvate + UDP-N-acetyl-alpha-D-glucosamine = UDP-N-acetyl-3-O-(1-carboxyvinyl)-alpha-D-glucosamine + phosphate. The protein operates within cell wall biogenesis; peptidoglycan biosynthesis. In terms of biological role, cell wall formation. Adds enolpyruvyl to UDP-N-acetylglucosamine. The chain is UDP-N-acetylglucosamine 1-carboxyvinyltransferase from Halothermothrix orenii (strain H 168 / OCM 544 / DSM 9562).